A 276-amino-acid polypeptide reads, in one-letter code: Undecaprenyl-diphosphatase (276 aa).

6 helical membrane-spanning segments follow: residues 43-63, 85-105, 109-129, 184-204, 218-238, and 254-274; these read RAMA…VWEF, INLL…ADLI, LFNP…MLWA, ATEF…VYSG, VFAI…KGLL, and IAFG…WTAA.

The protein belongs to the UppP family.

It is found in the cell inner membrane. It catalyses the reaction di-trans,octa-cis-undecaprenyl diphosphate + H2O = di-trans,octa-cis-undecaprenyl phosphate + phosphate + H(+). Functionally, catalyzes the dephosphorylation of undecaprenyl diphosphate (UPP). Confers resistance to bacitracin. The polypeptide is Undecaprenyl-diphosphatase (Pseudomonas fluorescens (strain ATCC BAA-477 / NRRL B-23932 / Pf-5)).